The primary structure comprises 165 residues: Large ribosomal subunit protein uL10 (165 aa).

This sequence belongs to the universal ribosomal protein uL10 family. In terms of assembly, part of the ribosomal stalk of the 50S ribosomal subunit. The N-terminus interacts with L11 and the large rRNA to form the base of the stalk. The C-terminus forms an elongated spine to which L12 dimers bind in a sequential fashion forming a multimeric L10(L12)X complex.

In terms of biological role, forms part of the ribosomal stalk, playing a central role in the interaction of the ribosome with GTP-bound translation factors. This Sodalis glossinidius (strain morsitans) protein is Large ribosomal subunit protein uL10.